A 250-amino-acid chain; its full sequence is Bacteriorhodopsin (250 aa).

At 1–18 the chain is on the extracellular side; it reads MCCAALAPPMAATVGPES. Residues 19–37 traverse the membrane as a helical segment; sequence IWLWIGTIGMTLGTLYFVG. The Cytoplasmic segment spans residues 38 to 51; sequence RGRGVRDRKMQEFY. Residues 52 to 70 traverse the membrane as a helical segment; sequence IITIFITTIAAAMYFAMAT. Residues 71–86 lie on the Extracellular side of the membrane; it reads GFGVTEVMVGDEALTI. Residues 87–104 form a helical membrane-spanning segment; sequence YWARYADWLFTTPLLLLD. The Cytoplasmic segment spans residues 105–115; the sequence is LSLLAGANRNT. A helical membrane pass occupies residues 116–135; sequence IATLIGLDVFMIGTGAIAAL. Topologically, residues 136 to 142 are extracellular; that stretch reads SSTPGTR. A helical membrane pass occupies residues 143–162; the sequence is IAWWAISTGALLALLYVLVG. Residues 163–180 are Cytoplasmic-facing; that stretch reads TLSENARNRAPEVASLFG. The chain crosses the membrane as a helical span at residues 181–199; the sequence is RLRNLVIALWFLYPVVWIL. At 200–212 the chain is on the extracellular side; it reads GTEGTFGILPLYW. The chain crosses the membrane as a helical span at residues 213–232; it reads ETAAFMVLDLSAKVGFGVIL. Lys-225 bears the N6-(retinylidene)lysine mark. Over 233 to 250 the chain is Cytoplasmic; that stretch reads LQSRSVLERVATPTAAPT.

This sequence belongs to the archaeal/bacterial/fungal opsin family.

It is found in the cell membrane. Functionally, light-driven proton pump. The sequence is that of Bacteriorhodopsin (bop) from Haloterrigena sp. (strain arg-4).